The chain runs to 348 residues: Uroporphyrinogen decarboxylase (348 aa).

Residues 29–33, Asp-79, Tyr-155, Thr-210, and His-326 each bind substrate; that span reads RQAGR.

Belongs to the uroporphyrinogen decarboxylase family. In terms of assembly, homodimer.

The protein resides in the cytoplasm. It catalyses the reaction uroporphyrinogen III + 4 H(+) = coproporphyrinogen III + 4 CO2. The protein operates within porphyrin-containing compound metabolism; protoporphyrin-IX biosynthesis; coproporphyrinogen-III from 5-aminolevulinate: step 4/4. Catalyzes the decarboxylation of four acetate groups of uroporphyrinogen-III to yield coproporphyrinogen-III. The polypeptide is Uroporphyrinogen decarboxylase (Rhodospirillum rubrum (strain ATCC 11170 / ATH 1.1.1 / DSM 467 / LMG 4362 / NCIMB 8255 / S1)).